Consider the following 689-residue polypeptide: Protein asunder (689 aa).

The stretch at Asn521 to Thr550 forms a coiled coil. 2 disordered regions span residues Gly578–Arg619 and Pro662–Ser689. Positions Ser599–Lys614 are enriched in low complexity. The Nuclear localization signal (NLS) signature appears at Leu613–Arg619.

It belongs to the Integrator subunit 13 family. As to quaternary structure, belongs to the multiprotein complex Integrator, at least composed of IntS1, IntS2, IntS3, IntS4, omd/IntS5, IntS6, defl/IntS7, IntS8, IntS9, IntS10, IntS11, IntS12, asun/IntS13, IntS14 and IntS15. The core complex associates with protein phosphatase 2A subunits mts/PP2A and Pp2A-29B, to form the Integrator-PP2A (INTAC) complex. Post-translationally, phosphorylated.

The protein resides in the nucleus. It localises to the cytoplasm. Its subcellular location is the perinuclear region. Its function is as follows. Component of the integrator complex, a multiprotein complex that terminates RNA polymerase II (Pol II) transcription in the promoter-proximal region of genes. The integrator complex provides a quality checkpoint during transcription elongation by driving premature transcription termination of transcripts that are unfavorably configured for transcriptional elongation: the complex terminates transcription by (1) catalyzing dephosphorylation of the C-terminal domain (CTD) of Pol II subunit Polr2A/Rbp1 and Spt5, and (2) degrading the exiting nascent RNA transcript via endonuclease activity. The integrator complex is also involved in the 3'-end processing of the U7 snRNA, and also the spliceosomal snRNAs U1, U2, U4 and U5. The polypeptide is Protein asunder (asun) (Drosophila yakuba (Fruit fly)).